Consider the following 1165-residue polypeptide: DNA-directed RNA polymerase subunit beta' (1165 aa).

Residues cysteine 60, cysteine 62, cysteine 75, and cysteine 78 each contribute to the Zn(2+) site. Mg(2+) contacts are provided by aspartate 449, aspartate 451, and aspartate 453. 4 residues coordinate Zn(2+): cysteine 794, cysteine 868, cysteine 875, and cysteine 878.

Belongs to the RNA polymerase beta' chain family. In terms of assembly, the RNAP catalytic core consists of 2 alpha, 1 beta, 1 beta' and 1 omega subunit. When a sigma factor is associated with the core the holoenzyme is formed, which can initiate transcription. The cofactor is Mg(2+). Zn(2+) serves as cofactor.

It carries out the reaction RNA(n) + a ribonucleoside 5'-triphosphate = RNA(n+1) + diphosphate. DNA-dependent RNA polymerase catalyzes the transcription of DNA into RNA using the four ribonucleoside triphosphates as substrates. The chain is DNA-directed RNA polymerase subunit beta' from Acetivibrio thermocellus (strain ATCC 27405 / DSM 1237 / JCM 9322 / NBRC 103400 / NCIMB 10682 / NRRL B-4536 / VPI 7372) (Clostridium thermocellum).